The chain runs to 508 residues: Protein ultraspiracle (508 aa).

The tract at residues Met1–Leu103 is modulating. Disordered regions lie at residues Pro21–Ser40 and Pro55–Pro92. A compositionally biased stretch (polar residues) spans Ser24–Ser35. Ser35 carries the phosphoserine modification. The span at Ser57–Gln90 shows a compositional bias: low complexity. 2 NR C4-type zinc fingers span residues Cys104 to Cys124 and Cys140 to Cys164. A DNA-binding region (nuclear receptor) is located at residues Cys104–Met169. The hinge stretch occupies residues Lys170–Gly223. Positions Arg178 to Asp228 are disordered. A compositionally biased stretch (gly residues) spans Ser192–Asn224. The NR LBD domain maps to Ser239 to Pro498.

It belongs to the nuclear hormone receptor family. NR2 subfamily. As to quaternary structure, heterodimer of USP and ECR. Only the heterodimer is capable of high-affinity binding to ecdysone.

Its subcellular location is the nucleus. Functionally, receptor for ecdysone. May be an important modulator of insect metamorphosis. Plays an important part in embryonic and post-embryonic development. Binds to ecdysone response elements (ECRES) such as in the promoter region of s15 chorion gene. The sequence is that of Protein ultraspiracle (usp) from Drosophila melanogaster (Fruit fly).